Reading from the N-terminus, the 331-residue chain is Ketol-acid reductoisomerase (NADP(+)) (331 aa).

In terms of domain architecture, KARI N-terminal Rossmann spans 2–181 (LEKYYDKDAD…GATRAVVFET (180 aa)). NADP(+) contacts are provided by residues 25–28 (YGSQ), arginine 48, serine 52, and 82–85 (DEQQ). Histidine 107 is an active-site residue. Glycine 133 contacts NADP(+). The KARI C-terminal knotted domain occupies 182–327 (SFREETETDL…KEIRATMPQF (146 aa)). Mg(2+)-binding residues include aspartate 190, glutamate 194, glutamate 226, and glutamate 230. Substrate is bound at residue serine 251.

The protein belongs to the ketol-acid reductoisomerase family. It depends on Mg(2+) as a cofactor.

It catalyses the reaction (2R)-2,3-dihydroxy-3-methylbutanoate + NADP(+) = (2S)-2-acetolactate + NADPH + H(+). The catalysed reaction is (2R,3R)-2,3-dihydroxy-3-methylpentanoate + NADP(+) = (S)-2-ethyl-2-hydroxy-3-oxobutanoate + NADPH + H(+). Its pathway is amino-acid biosynthesis; L-isoleucine biosynthesis; L-isoleucine from 2-oxobutanoate: step 2/4. It functions in the pathway amino-acid biosynthesis; L-valine biosynthesis; L-valine from pyruvate: step 2/4. Involved in the biosynthesis of branched-chain amino acids (BCAA). Catalyzes an alkyl-migration followed by a ketol-acid reduction of (S)-2-acetolactate (S2AL) to yield (R)-2,3-dihydroxy-isovalerate. In the isomerase reaction, S2AL is rearranged via a Mg-dependent methyl migration to produce 3-hydroxy-3-methyl-2-ketobutyrate (HMKB). In the reductase reaction, this 2-ketoacid undergoes a metal-dependent reduction by NADPH to yield (R)-2,3-dihydroxy-isovalerate. The sequence is that of Ketol-acid reductoisomerase (NADP(+)) from Methanospirillum hungatei JF-1 (strain ATCC 27890 / DSM 864 / NBRC 100397 / JF-1).